The sequence spans 327 residues: Phenylalanine--tRNA ligase alpha subunit (327 aa).

Glu252 provides a ligand contact to Mg(2+).

The protein belongs to the class-II aminoacyl-tRNA synthetase family. Phe-tRNA synthetase alpha subunit type 1 subfamily. As to quaternary structure, tetramer of two alpha and two beta subunits. It depends on Mg(2+) as a cofactor.

Its subcellular location is the cytoplasm. The catalysed reaction is tRNA(Phe) + L-phenylalanine + ATP = L-phenylalanyl-tRNA(Phe) + AMP + diphosphate + H(+). This chain is Phenylalanine--tRNA ligase alpha subunit, found in Proteus mirabilis (strain HI4320).